A 692-amino-acid chain; its full sequence is DNA-binding protein RFX2 (692 aa).

Residues 1 to 26 form a disordered region; that stretch reads MQNSEGGADSPATVALRPAAQPVPAS. A Phosphoserine modification is found at Ser-26. The segment at residues 169-244 is a DNA-binding region (RFX-type winged-helix); the sequence is TLQWLLDNYE…YHYYGIRLKP (76 aa). The interval 261-296 is disordered; it reads RQQPTHQKPRYRPAQKSDSLGDGSAHSNMHSTPEQA. The segment covering 285 to 294 has biased composition (polar residues); it reads AHSNMHSTPE. Position 386 is a phosphoserine (Ser-386). Residues 660–685 are compositionally biased toward basic and acidic residues; sequence DGHSSEADVDGRSLGEPLVKRERSDP. The disordered stretch occupies residues 660-692; the sequence is DGHSSEADVDGRSLGEPLVKRERSDPSHPLQGI.

It belongs to the RFX family. Homodimer; probably only forms homodimers in testis. Heterodimer; heterodimerizes with RFX1 and RFX3. Expressed at highest level in testis. Expressed at lower level in thymus. Also expressed in stomach, kidney, liver, brain and heart. Weakly expressed in spleen and lung. Within testis, most abundantly present in spermatocytes: present from pachytene spermatocytes to early spermatids (at protein level). Also present in non-germinal tissues.

The protein resides in the nucleus. The protein localises to the cytoplasm. In terms of biological role, transcription factor that acts as a key regulator of spermatogenesis. Acts by regulating expression of genes required for the haploid phase during spermiogenesis, such as genes required for cilium assembly and function. Recognizes and binds the X-box, a regulatory motif with DNA sequence 5'-GTNRCC(0-3N)RGYAAC-3' present on promoters. Probably activates transcription of the testis-specific histone gene H1-6. This Rattus norvegicus (Rat) protein is DNA-binding protein RFX2 (Rfx2).